Here is a 90-residue protein sequence, read N- to C-terminus: UPF0297 protein LVIS_1222 (90 aa).

Belongs to the UPF0297 family.

This is UPF0297 protein LVIS_1222 from Levilactobacillus brevis (strain ATCC 367 / BCRC 12310 / CIP 105137 / JCM 1170 / LMG 11437 / NCIMB 947 / NCTC 947) (Lactobacillus brevis).